We begin with the raw amino-acid sequence, 141 residues long: Putative pre-16S rRNA nuclease (141 aa).

Belongs to the YqgF nuclease family.

The protein resides in the cytoplasm. Its function is as follows. Could be a nuclease involved in processing of the 5'-end of pre-16S rRNA. This chain is Putative pre-16S rRNA nuclease, found in Cupriavidus taiwanensis (strain DSM 17343 / BCRC 17206 / CCUG 44338 / CIP 107171 / LMG 19424 / R1) (Ralstonia taiwanensis (strain LMG 19424)).